The primary structure comprises 101 residues: Small ribosomal subunit protein uS14A (101 aa).

The interval 35–56 is disordered; sequence TSSYEQRLDAQRALSRQPRDAS.

This sequence belongs to the universal ribosomal protein uS14 family. Part of the 30S ribosomal subunit. Contacts proteins S3 and S10.

Binds 16S rRNA, required for the assembly of 30S particles and may also be responsible for determining the conformation of the 16S rRNA at the A site. This is Small ribosomal subunit protein uS14A from Mycobacterium marinum (strain ATCC BAA-535 / M).